We begin with the raw amino-acid sequence, 542 residues long: Sensor protein CitS (542 aa).

At 1–13 (MVKKRFHFSLQTK) the chain is on the cytoplasmic side. Residues 14 to 34 (IMGLIAALLVFVIGVLTITLA) form a helical membrane-spanning segment. The Extracellular portion of the chain corresponds to 35–175 (VQHTQGERRQ…TEQSIKKHLR (141 aa)). Residues 176 to 196 (NLSVIAVLVLLLGFIGAAVLA) form a helical membrane-spanning segment. The Cytoplasmic portion of the chain corresponds to 197-542 (KSIRKDTLGL…PFDSHRDCGG (346 aa)). Positions 216-279 (RERNAMLFAI…MSVLEKGEML (64 aa)) constitute a PAS domain. One can recognise a Histidine kinase domain in the interval 336 to 528 (AQTHEFSNKL…VFTVFIPKEK (193 aa)). Residue His339 is modified to Phosphohistidine; by autocatalysis.

It is found in the cell membrane. It carries out the reaction ATP + protein L-histidine = ADP + protein N-phospho-L-histidine.. Its function is as follows. Member of the two-component regulatory system CitT/CitS. Regulates the expression of the citM-yflN operon. Functions probably as a membrane-associated protein kinase that phosphorylates CitT in response to environmental citrate or Mg(2+)-citrate complex. The protein is Sensor protein CitS (citS) of Bacillus subtilis (strain 168).